The following is a 259-amino-acid chain: Glutamate racemase (259 aa).

Substrate contacts are provided by residues 9 to 10 and 41 to 42; these read DS and YG. The active-site Proton donor/acceptor is Cys73. 74–75 provides a ligand contact to substrate; it reads NT. The active-site Proton donor/acceptor is the Cys183. 184 to 185 is a substrate binding site; that stretch reads TH.

The protein belongs to the aspartate/glutamate racemases family.

It carries out the reaction L-glutamate = D-glutamate. The protein operates within cell wall biogenesis; peptidoglycan biosynthesis. Provides the (R)-glutamate required for cell wall biosynthesis. The sequence is that of Glutamate racemase from Shewanella frigidimarina (strain NCIMB 400).